Consider the following 81-residue polypeptide: Putative membrane protein insertion efficiency factor (81 aa).

The interval 61 to 81 (NDGGFDPVPPAPSSRTSSIAE) is disordered.

This sequence belongs to the UPF0161 family.

Its subcellular location is the cell inner membrane. Could be involved in insertion of integral membrane proteins into the membrane. The sequence is that of Putative membrane protein insertion efficiency factor from Pseudomonas entomophila (strain L48).